Consider the following 170-residue polypeptide: Neurotensin/neuromedin N (170 aa).

The N-terminal stretch at 1–23 (MMAGMKIQLVCMILLAFSSWSLC) is a signal peptide.

The protein belongs to the neurotensin family. As to quaternary structure, interacts with NTSR1. Interacts with SORT1. Interacts with SORL1. Post-translationally, neurotensin is cleaved and degraded by Angiotensin-converting enzyme (ACE) and neprilysin (MME). In terms of tissue distribution, brain and gut.

It is found in the secreted. The protein localises to the cytoplasmic vesicle. It localises to the secretory vesicle. Neurotensin may play an endocrine or paracrine role in the regulation of fat metabolism. It causes contraction of smooth muscle. The polypeptide is Neurotensin/neuromedin N (NTS) (Bos taurus (Bovine)).